The sequence spans 806 residues: Mitochondrial intermediate peptidase (806 aa).

A mitochondrion-targeting transit peptide spans 1–29; the sequence is MLSRHLTVLRSACRVSHDLRVPSTQAVRK. His-581 contacts Zn(2+). Residue Glu-582 is part of the active site. Residues His-585 and His-588 each contribute to the Zn(2+) site.

Belongs to the peptidase M3 family. The cofactor is Zn(2+).

It localises to the mitochondrion matrix. The enzyme catalyses Release of an N-terminal octapeptide as second stage of processing of some proteins imported into the mitochondrion.. Cleaves proteins, imported into the mitochondrion, to their mature size. While most mitochondrial precursor proteins are processed to the mature form in one step by mitochondrial processing peptidase (MPP), the sequential cleavage by MIP of an octapeptide after initial processing by MPP is a required step for a subgroup of nuclear-encoded precursor proteins destined for the matrix or the inner membrane. The protein is Mitochondrial intermediate peptidase (OCT1) of Malassezia globosa (strain ATCC MYA-4612 / CBS 7966) (Dandruff-associated fungus).